We begin with the raw amino-acid sequence, 425 residues long: Sucrose-phosphatase 1 (425 aa).

Belongs to the sucrose phosphatase family. In terms of assembly, homodimer. Mg(2+) is required as a cofactor.

The enzyme catalyses sucrose 6(F)-phosphate + H2O = sucrose + phosphate. It participates in glycan biosynthesis; sucrose biosynthesis; sucrose from D-fructose 6-phosphate and UDP-alpha-D-glucose: step 2/2. Inhibited by EDTA. Its function is as follows. Catalyzes the final step of sucrose synthesis. The sequence is that of Sucrose-phosphatase 1 (SPP1) from Nicotiana tabacum (Common tobacco).